We begin with the raw amino-acid sequence, 501 residues long: Actin nucleation-promoting factor WASL (501 aa).

Ser2 bears the N-acetylserine mark. The WH1 domain occupies 31 to 138; it reads LGKKCVTMSS…KAVTDLLGRR (108 aa). A disordered region spans residues 135 to 158; sequence LGRRQRKSEKRRDAPNGPNLPMAT. Residues 200–213 form the CRIB domain; it reads IGTPSNFQHIGHVG. Residue Ser239 is modified to Phosphoserine; by TNK2. At Tyr253 the chain carries Phosphotyrosine; by FAK1 and TNK2. Disordered regions lie at residues 263–403 and 442–501; these read EAVK…GNKA and QLKS…EWED. Residues 273–387 are compositionally biased toward pro residues; it reads APPPPPPSRG…PPGPPPPPGL (115 aa). The residue at position 304 (Arg304) is an Omega-N-methylarginine. 2 WH2 domains span residues 401-418 and 429-446; these read NKAA…LKKV and GRDA…LKSV. Over residues 442-453 the composition is skewed to polar residues; it reads QLKSVSDGQEST. 2 positions are modified to phosphoserine: Ser480 and Ser481. Over residues 482–501 the composition is skewed to acidic residues; the sequence is DEDEDDDDEEDFEDDDEWED.

As to quaternary structure, binds actin and the Arp2/3 complex. Interacts with CDC42. Interacts with FCHSD1. Interacts with FCHSD2. Binds to SH3 domains of GRB2. Interacts with the C-terminal SH3 domain of DNMBP. Interacts with SNX9. Interacts with the WW domains of PRPF40A/FBP11. Interacts with PTK2/FAK1. Interacts with PACSIN1, PACSIN2 and PACSIN3. Interacts with NOSTRIN. Binds to TNK2. Interacts with SNX33. Interacts with NONO (via second RRM domain); the interaction is direct. Component of a multiprotein complex with NONO and SFPQ; associates with the complex via direct interaction with NONO. In terms of processing, phosphorylation at Ser-239, Tyr-253, Ser-480 and Ser-481 enhances actin polymerization activity.

It is found in the cytoplasm. Its subcellular location is the cytoskeleton. The protein resides in the nucleus. Functionally, regulates actin polymerization by stimulating the actin-nucleating activity of the Arp2/3 complex. Involved in various processes, such as mitosis and cytokinesis, via its role in the regulation of actin polymerization. Together with CDC42, involved in the extension and maintenance of the formation of thin, actin-rich surface projections called filopodia. In addition to its role in the cytoplasm, also plays a role in the nucleus by regulating gene transcription, probably by promoting nuclear actin polymerization. Binds to HSF1/HSTF1 and forms a complex on heat shock promoter elements (HSE) that negatively regulates HSP90 expression. Plays a role in dendrite spine morphogenesis. The chain is Actin nucleation-promoting factor WASL (Wasl) from Mus musculus (Mouse).